The primary structure comprises 496 residues: Legumin (496 aa).

The N-terminal stretch at 1–21 (MAKLLALSLSFCFLLFGTCFA) is a signal peptide. Disulfide bonds link Cys31/Cys64 and Cys107/Cys318. Positions 36–230 (LNALKPDNRI…ALNVNRRIVN (195 aa)) constitute a Cupin type-1 1 domain. The tract at residues 240-311 (EKGAIVKVKG…RGGSKSQRDN (72 aa)) is disordered. The segment covering 257-269 (PEKEPRQKRGSRQ) has biased composition (basic and acidic residues). Residues 324 to 453 (QNIGSSSSPD…INVCQKKLLQ (130 aa)) enclose the Cupin type-1 2 domain.

This sequence belongs to the 11S seed storage protein (globulins) family. Hexamer; each subunit is composed of an acidic and a basic chain derived from a single precursor and linked by a disulfide bond.

Its function is as follows. Seed storage protein. Alpha-amylase inhibitor. The sequence is that of Legumin from Cicer arietinum (Chickpea).